We begin with the raw amino-acid sequence, 78 residues long: Acyl carrier protein (78 aa).

The region spanning 2–77 (SDILERVRKI…DAVKFITEKT (76 aa)) is the Carrier domain. An O-(pantetheine 4'-phosphoryl)serine modification is found at serine 37.

The protein belongs to the acyl carrier protein (ACP) family. 4'-phosphopantetheine is transferred from CoA to a specific serine of apo-ACP by AcpS. This modification is essential for activity because fatty acids are bound in thioester linkage to the sulfhydryl of the prosthetic group.

It localises to the cytoplasm. The protein operates within lipid metabolism; fatty acid biosynthesis. Functionally, carrier of the growing fatty acid chain in fatty acid biosynthesis. The chain is Acyl carrier protein from Caulobacter vibrioides (strain ATCC 19089 / CIP 103742 / CB 15) (Caulobacter crescentus).